Here is a 208-residue protein sequence, read N- to C-terminus: Outer-membrane lipoprotein carrier protein (208 aa).

The N-terminal stretch at 1–22 (MKKRLCAVLLASPLLFSAAVFA) is a signal peptide.

Belongs to the LolA family. As to quaternary structure, monomer.

It localises to the periplasm. Participates in the translocation of lipoproteins from the inner membrane to the outer membrane. Only forms a complex with a lipoprotein if the residue after the N-terminal Cys is not an aspartate (The Asp acts as a targeting signal to indicate that the lipoprotein should stay in the inner membrane). This is Outer-membrane lipoprotein carrier protein from Shewanella baltica (strain OS195).